Here is a 297-residue protein sequence, read N- to C-terminus: Malonyl-[acyl-carrier protein] O-methyltransferase (297 aa).

The protein belongs to the methyltransferase superfamily.

It carries out the reaction malonyl-[ACP] + S-adenosyl-L-methionine = malonyl-[ACP] methyl ester + S-adenosyl-L-homocysteine. Its pathway is cofactor biosynthesis; biotin biosynthesis. In terms of biological role, converts the free carboxyl group of a malonyl-thioester to its methyl ester by transfer of a methyl group from S-adenosyl-L-methionine (SAM). It allows to synthesize pimeloyl-ACP via the fatty acid synthetic pathway. The sequence is that of Malonyl-[acyl-carrier protein] O-methyltransferase from Laribacter hongkongensis (strain HLHK9).